Consider the following 603-residue polypeptide: 65-kDa microtubule-associated protein 7 (603 aa).

3 coiled-coil regions span residues 48–79 (KECL…EAEI), 131–186 (DIKA…EKSD), and 468–502 (RLVS…LLIK). The tract at residues 501 to 559 (IKRRESIYGSKPSPRRSNSVRKTNGYNGDASVPPTPRRNSAGATNNDIMTTPRSYSSHR) is disordered. S513 is subject to Phosphoserine. Polar residues-rich tracts occupy residues 515–526 (RRSNSVRKTNGY) and 537–559 (RRNS…SSHR). S599 carries the phosphoserine modification.

It belongs to the MAP65/ASE1 family. Forms dimer. Binds to microtubules (MT).

Its subcellular location is the nucleus. The protein resides in the cytoplasm. The protein localises to the cytoskeleton. It localises to the spindle pole. This is 65-kDa microtubule-associated protein 7 (MAP65-7) from Arabidopsis thaliana (Mouse-ear cress).